The primary structure comprises 97 residues: Defensin-like protein 196 (97 aa).

The first 28 residues, 1 to 28 (MAKMSALSIFAIFIILVLVIFEIPEIEA), serve as a signal peptide directing secretion. Disulfide bonds link cysteine 33-cysteine 85, cysteine 46-cysteine 70, cysteine 55-cysteine 80, and cysteine 59-cysteine 82.

This sequence belongs to the DEFL family. Protease inhibitor I18 (RTI/MTI-2) subfamily.

It localises to the secreted. This Arabidopsis thaliana (Mouse-ear cress) protein is Defensin-like protein 196 (ATTI4).